Here is a 388-residue protein sequence, read N- to C-terminus: MVGTPLFSNAKKILLLGSGELGKEVIIEAQRLGVECIAVDSYENAPAMQVAHRYHVIDMKDSGSLRAVIEREKPDLIVPEIEAINTDTLKEMETEGYHVVPTANAAKLTMDREGIRRLASEKLGLRTAKYEFADSLDELKEAVKRIGIPCIIKPIMSSSGKGQSTVKSEFDIEKSWDYAKSATRGIGTKVIVEEFVNFDYEITLLTARTAFGTKFCEPIGHIQIDGDYHESWQPHPMCSPTKAKAQEVAKKITDELGGYGIFGVELFIMDDEVIFSEVSPRPHDTGMVTMVTQKMSEFEIHVRSILGLPVNVDLSYPGASYVIKSEIYKWAPEYDIIEASKLKDTKIRLFGKPVAKIGRRMGVALSTAEDVSVARDTAKKAANIVKIK.

Residues 20–21 (EL) and E80 contribute to the N(1)-(5-phospho-beta-D-ribosyl)glycinamide site. Residues R112, K153, 158-163 (SSGKGQ), 193-196 (EEFV), and E201 contribute to the ATP site. The ATP-grasp domain occupies 117–306 (RLASEKLGLR…EFEIHVRSIL (190 aa)). Residues E265 and E277 each coordinate Mg(2+). Residues D284, K352, and 359–360 (RR) contribute to the N(1)-(5-phospho-beta-D-ribosyl)glycinamide site.

It belongs to the PurK/PurT family. Homodimer.

The enzyme catalyses N(1)-(5-phospho-beta-D-ribosyl)glycinamide + formate + ATP = N(2)-formyl-N(1)-(5-phospho-beta-D-ribosyl)glycinamide + ADP + phosphate + H(+). It participates in purine metabolism; IMP biosynthesis via de novo pathway; N(2)-formyl-N(1)-(5-phospho-D-ribosyl)glycinamide from N(1)-(5-phospho-D-ribosyl)glycinamide (formate route): step 1/1. Functionally, involved in the de novo purine biosynthesis. Catalyzes the transfer of formate to 5-phospho-ribosyl-glycinamide (GAR), producing 5-phospho-ribosyl-N-formylglycinamide (FGAR). Formate is provided by PurU via hydrolysis of 10-formyl-tetrahydrofolate. The chain is Formate-dependent phosphoribosylglycinamide formyltransferase from Methanococcus vannielii (strain ATCC 35089 / DSM 1224 / JCM 13029 / OCM 148 / SB).